Reading from the N-terminus, the 549-residue chain is MLTSERSYLRYPKNRRWTEAGRFWAPHPENVLFIHKPTMEETRRVALGLRSQLVRNRERKTKAHLLSLELDRLVQVHDSRVRVINADIDAVKQMIGNMTWSDNIDMPQSRSHEPPLVTSPPQASHRNFTVAIVPGDPHFSVDRDLRGELMPTLYMNQNQWLPSFGPWFISLTDNAMQRRVFPKELKGTVNFQNSTSLKLISHTLTTVASTTADFFADARHLTDTQAALCLVNAYFCQKTSRQLPATPDDLLADLPQKLDLLITQLKQESGPGDFSFTYSNPQERASLAPLNKESRYPTAFFQRHKLHAMMAKAGLFPHNKGTGAPGTAPAMDLVFAITSAMFGSDIPPFSAYQWNLRAGIVALEVFILAYGLLEFGQVARGHPNRRLNLVSLLGPKFQPGALPDPNAPMLKRGQLFSFISEHYIIPTLQANPNAPVSFIFPGIILAALEARSTVSHKQPGPFVNLTGSRFNEIFEILNQQLTFRDPLALLQARTALRLATEEGLDVLLSHPSPPTLLQEIIKSQFGGGDDYDRAYFMVLGCLPVVLAVV.

The segment at 1-54 is interaction with major capsid protein/MCP; it reads MLTSERSYLRYPKNRRWTEAGRFWAPHPENVLFIHKPTMEETRRVALGLRSQLV.

Belongs to the herpesviridae CVC2 protein family. Heterodimerizes with CVC1. Interacts with major capsid protein/MCP and triplex capsid protein 1/TRX1 at the pentamer vertices. Interacts with the large tegument protein/LTP.

The protein localises to the virion. The protein resides in the host nucleus. Capsid vertex-specific component that plays a role during viral DNA encapsidation, assuring correct genome cleavage and presumably stabilizing capsids that contain full-length viral genomes. Participates in the interaction between the capsid and the tegument through interaction with the large tegument protein/LTP. The sequence is that of Capsid vertex component 2 from Human herpesvirus 8 type P (isolate GK18) (HHV-8).